The sequence spans 164 residues: Large ribosomal subunit protein uL11 (164 aa).

The protein belongs to the universal ribosomal protein uL11 family. Part of the ribosomal stalk of the 50S ribosomal subunit. Interacts with L10 and the large rRNA to form the base of the stalk. L10 forms an elongated spine to which L12 dimers bind in a sequential fashion forming a multimeric L10(L12)X complex.

Its function is as follows. Forms part of the ribosomal stalk which helps the ribosome interact with GTP-bound translation factors. The sequence is that of Large ribosomal subunit protein uL11 from Pyrococcus horikoshii (strain ATCC 700860 / DSM 12428 / JCM 9974 / NBRC 100139 / OT-3).